The following is a 239-amino-acid chain: MKSERIQTKGFKFKQFSIHGGESGMPVSTDGVMLGAWVNCIPQNKILDIGTGTGLLALMCAQRFPSAQITALDIEITAIEAAKQNFAQSTWSDRLSLHHSDVLQFEPEHRFERIICNPPYFNSGEQSKQSQRATARHTDTLQHSALLNRCHELLTNEGTASFVLPITEGEQFITMALQQGWHLSRLCRVQPSQKKPVHRLLFELAKQACDTQETHLIIHSSEGYSDDFTQLTREFYLKM.

Belongs to the methyltransferase superfamily. tRNA (adenine-N(6)-)-methyltransferase family.

It localises to the cytoplasm. It catalyses the reaction adenosine(37) in tRNA1(Val) + S-adenosyl-L-methionine = N(6)-methyladenosine(37) in tRNA1(Val) + S-adenosyl-L-homocysteine + H(+). Functionally, specifically methylates the adenine in position 37 of tRNA(1)(Val) (anticodon cmo5UAC). This Vibrio campbellii (strain ATCC BAA-1116) protein is tRNA1(Val) (adenine(37)-N6)-methyltransferase.